A 122-amino-acid polypeptide reads, in one-letter code: Small ribosomal subunit protein uS12 (122 aa).

Residues 1 to 45 form a disordered region; the sequence is MPTTNQLVRKERKRQTKKTATPALQGSPQRRGVCTRVSTTTPKKP. Positions 18 to 28 are enriched in polar residues; it reads KTATPALQGSP. Position 89 is a 3-methylthioaspartic acid (aspartate 89).

This sequence belongs to the universal ribosomal protein uS12 family. In terms of assembly, part of the 30S ribosomal subunit. Contacts proteins S8 and S17. May interact with IF1 in the 30S initiation complex.

In terms of biological role, with S4 and S5 plays an important role in translational accuracy. Its function is as follows. Interacts with and stabilizes bases of the 16S rRNA that are involved in tRNA selection in the A site and with the mRNA backbone. Located at the interface of the 30S and 50S subunits, it traverses the body of the 30S subunit contacting proteins on the other side and probably holding the rRNA structure together. The combined cluster of proteins S8, S12 and S17 appears to hold together the shoulder and platform of the 30S subunit. This Rubrobacter xylanophilus (strain DSM 9941 / JCM 11954 / NBRC 16129 / PRD-1) protein is Small ribosomal subunit protein uS12.